The sequence spans 275 residues: MSNLQAIIEAAFEKRAEITPKTVDAETHAAIEEVIEGLDSGKYRVAEKIAGEWVTHQWLKKAVLLSFRINDNQIIDGAETKYYDKVALKFADYTEERFTEEGFRVVPSATVRKGAYISKNCVLMPSYVNIGAYVGEGTMVDTWATVGSCAQIGKNVHLSGGVGIGGVLEPLQANPTIIGDNCFIGARSEVVEGVIVEDGCVISMGVFIGQSTKIYDRETGEIHYGRVPAGSVVVSGSLPSKCGKYSLYCAVIVKKVDAKTLGKVGINELLRSIEE.

Residues R104 and D141 each contribute to the substrate site.

This sequence belongs to the transferase hexapeptide repeat family. In terms of assembly, homotrimer.

The protein localises to the cytoplasm. It carries out the reaction (S)-2,3,4,5-tetrahydrodipicolinate + succinyl-CoA + H2O = (S)-2-succinylamino-6-oxoheptanedioate + CoA. Its pathway is amino-acid biosynthesis; L-lysine biosynthesis via DAP pathway; LL-2,6-diaminopimelate from (S)-tetrahydrodipicolinate (succinylase route): step 1/3. This Haemophilus influenzae (strain 86-028NP) protein is 2,3,4,5-tetrahydropyridine-2,6-dicarboxylate N-succinyltransferase.